The following is a 475-amino-acid chain: Glycogen synthase (475 aa).

Lys15 is a binding site for ADP-alpha-D-glucose.

This sequence belongs to the glycosyltransferase 1 family. Bacterial/plant glycogen synthase subfamily.

It catalyses the reaction [(1-&gt;4)-alpha-D-glucosyl](n) + ADP-alpha-D-glucose = [(1-&gt;4)-alpha-D-glucosyl](n+1) + ADP + H(+). It participates in glycan biosynthesis; glycogen biosynthesis. Functionally, synthesizes alpha-1,4-glucan chains using ADP-glucose. The sequence is that of Glycogen synthase from Kosmotoga olearia (strain ATCC BAA-1733 / DSM 21960 / TBF 19.5.1).